The sequence spans 338 residues: UDP-glucose 4-epimerase (338 aa).

NAD(+) contacts are provided by residues 11–12 (FI), 31–36 (DNLCNS), 58–59 (DI), 80–84 (FAGLK), N99, S124, Y149, K153, and F178. 2 residues coordinate substrate: S124 and Y149. Y149 (proton acceptor) is an active-site residue. Substrate contacts are provided by residues N179, 199–200 (NL), 216–218 (SVF), R231, and 292–295 (RAGD).

It belongs to the NAD(P)-dependent epimerase/dehydratase family. In terms of assembly, homodimer. NAD(+) is required as a cofactor.

It catalyses the reaction UDP-alpha-D-glucose = UDP-alpha-D-galactose. Its pathway is carbohydrate metabolism; galactose metabolism. Its function is as follows. Involved in the metabolism of galactose. Plays an essential role in the incorporation of galactose into meningococcal lipopolysaccharide surface molecules, which are important for pathogenesis. Catalyzes the conversion of UDP-galactose (UDP-Gal) to UDP-glucose (UDP-Glc) through a mechanism involving the transient reduction of NAD. The sequence is that of UDP-glucose 4-epimerase (galE) from Neisseria gonorrhoeae.